The sequence spans 531 residues: Peptide chain release factor 3 (531 aa).

A tr-type G domain is found at 11-280; that stretch reads GRRRTFAIIS…AFIRFASRPG (270 aa). GTP is bound by residues 20-27, 88-92, and 142-145; these read SHPDAGKT, DTPGH, and NKLD.

Belongs to the TRAFAC class translation factor GTPase superfamily. Classic translation factor GTPase family. PrfC subfamily.

Its subcellular location is the cytoplasm. Functionally, increases the formation of ribosomal termination complexes and stimulates activities of RF-1 and RF-2. It binds guanine nucleotides and has strong preference for UGA stop codons. It may interact directly with the ribosome. The stimulation of RF-1 and RF-2 is significantly reduced by GTP and GDP, but not by GMP. The polypeptide is Peptide chain release factor 3 (Gloeobacter violaceus (strain ATCC 29082 / PCC 7421)).